The chain runs to 35 residues: Apolipophorin-3 (35 aa).

In terms of assembly, equilibrium between a soluble monomer and a bound lipoprotein form. Apolipophorin-3 associates with lipophorin during lipid loading until each particle contains 9 or 14 molecules of apolipophorin-3. As to expression, hemolymph.

It localises to the secreted. In terms of biological role, assists in the loading of diacylglycerol, generated from triacylglycerol stores in the fat body through the action of adipokinetic hormone, into lipophorin, the hemolymph lipoprotein. It increases the lipid carrying capacity of lipophorin by covering the expanding hydrophobic surface resulting from diacylglycerol uptake. It thus plays a critical role in the transport of lipids during flight in several species of insects. Has hemagglutinating activity towards rabbit erythrocytes. This is Apolipophorin-3 from Heliothis virescens (Tobacco budworm moth).